The following is a 607-amino-acid chain: UvrABC system protein C (607 aa).

Residues 11 to 89 enclose the GIY-YIG domain; it reads CKPGVYRFED…IKEFAPPCNV (79 aa). The UVR domain maps to 201–236; sequence SSLLESLKKKMLKASKNKEYEEAAILRDKIQAAQTV.

Belongs to the UvrC family. As to quaternary structure, interacts with UvrB in an incision complex.

Its subcellular location is the cytoplasm. The UvrABC repair system catalyzes the recognition and processing of DNA lesions. UvrC both incises the 5' and 3' sides of the lesion. The N-terminal half is responsible for the 3' incision and the C-terminal half is responsible for the 5' incision. The polypeptide is UvrABC system protein C (Tropheryma whipplei (strain TW08/27) (Whipple's bacillus)).